The primary structure comprises 214 residues: ATP synthase subunit a (214 aa).

Transmembrane regions (helical) follow at residues Leu9–Ile29, Ile64–Ile84, Leu88–Ile108, Ser121–Ile141, Leu150–Ser170, and Leu182–Phe202.

The protein belongs to the ATPase A chain family. As to quaternary structure, F-type ATPases have 2 components, CF(1) - the catalytic core - and CF(0) - the membrane proton channel. CF(1) has five subunits: alpha(3), beta(3), gamma(1), delta(1), epsilon(1). CF(0) has three main subunits: a, b and c.

The protein localises to the mitochondrion inner membrane. Mitochondrial membrane ATP synthase (F(1)F(0) ATP synthase or Complex V) produces ATP from ADP in the presence of a proton gradient across the membrane which is generated by electron transport complexes of the respiratory chain. F-type ATPases consist of two structural domains, F(1) - containing the extramembraneous catalytic core and F(0) - containing the membrane proton channel, linked together by a central stalk and a peripheral stalk. During catalysis, ATP synthesis in the catalytic domain of F(1) is coupled via a rotary mechanism of the central stalk subunits to proton translocation. Key component of the proton channel; it may play a direct role in the translocation of protons across the membrane. In Albinaria caerulea (Land snail), this protein is ATP synthase subunit a (ATP6).